Reading from the N-terminus, the 143-residue chain is Large ribosomal subunit protein uL11 (143 aa).

This sequence belongs to the universal ribosomal protein uL11 family. Part of the ribosomal stalk of the 50S ribosomal subunit. Interacts with L10 and the large rRNA to form the base of the stalk. L10 forms an elongated spine to which L12 dimers bind in a sequential fashion forming a multimeric L10(L12)X complex. In terms of processing, one or more lysine residues are methylated.

Functionally, forms part of the ribosomal stalk which helps the ribosome interact with GTP-bound translation factors. In Bordetella parapertussis (strain 12822 / ATCC BAA-587 / NCTC 13253), this protein is Large ribosomal subunit protein uL11.